The chain runs to 181 residues: UPF0398 protein LMHCC_0668 (181 aa).

This sequence belongs to the UPF0398 family.

The sequence is that of UPF0398 protein LMHCC_0668 from Listeria monocytogenes serotype 4a (strain HCC23).